Here is a 313-residue protein sequence, read N- to C-terminus: MACSRARARAYSSAANLGPGFDALAVALDAYYDEVEVRVCSGGNSVYVDEVEGKFSSGVLQGPNTAAEAVRGLLNMEGVEAEVGIRVYKGVPPGRGLGSSGASAAAAVAAVSHALALEVPVDRLVFYAGLGERAAAGQPHFDNAAASILGGLAVVASDAAGKLRVFRVPFKAWFAVVTPMNPVPQGKTGVMRKVLPENVSFRDAVRNFSRAAGIVAAAVNGDLKSMGALMMSDEIVEPRRRSYVPCYTQVRKAALQAGALGFSLSGAGPSMIALAPSSEAAREIAAAMEESCICCDNPMTVAAEPAPGASVVG.

An ATP-binding site is contributed by 92 to 102 (PPGRGLGSSGA).

The protein belongs to the GHMP kinase family. Homoserine kinase subfamily.

It localises to the cytoplasm. The enzyme catalyses L-homoserine + ATP = O-phospho-L-homoserine + ADP + H(+). Its pathway is amino-acid biosynthesis; L-threonine biosynthesis; L-threonine from L-aspartate: step 4/5. In terms of biological role, catalyzes the ATP-dependent phosphorylation of L-homoserine to L-homoserine phosphate. The protein is Homoserine kinase of Aeropyrum pernix (strain ATCC 700893 / DSM 11879 / JCM 9820 / NBRC 100138 / K1).